Consider the following 176-residue polypeptide: B9 domain-containing protein 2 (176 aa).

A C2 B9-type domain is found at 2–118 (AEVHIIGQII…LSPTWRPLGT (117 aa)).

It belongs to the B9D family. Part of the tectonic-like complex (also named B9 complex).

It is found in the cytoplasm. Its subcellular location is the cytoskeleton. The protein localises to the cilium basal body. The protein resides in the cilium axoneme. Component of the tectonic-like complex, a complex localized at the transition zone of primary cilia and acting as a barrier that prevents diffusion of transmembrane proteins between the cilia and plasma membranes. This chain is B9 domain-containing protein 2 (b9d2), found in Xenopus laevis (African clawed frog).